The following is a 523-amino-acid chain: 2-isopropylmalate synthase (523 aa).

Residues 5 to 267 (VIIFDTTLRD…HTNINHHEIW (263 aa)) form the Pyruvate carboxyltransferase domain. The Mn(2+) site is built by D14, H202, H204, and N238. Residues 392-523 (RLDYFNVQSG…QNKENNKETV (132 aa)) form a regulatory domain region.

This sequence belongs to the alpha-IPM synthase/homocitrate synthase family. LeuA type 1 subfamily. In terms of assembly, homodimer. Requires Mn(2+) as cofactor.

It localises to the cytoplasm. It catalyses the reaction 3-methyl-2-oxobutanoate + acetyl-CoA + H2O = (2S)-2-isopropylmalate + CoA + H(+). It participates in amino-acid biosynthesis; L-leucine biosynthesis; L-leucine from 3-methyl-2-oxobutanoate: step 1/4. In terms of biological role, catalyzes the condensation of the acetyl group of acetyl-CoA with 3-methyl-2-oxobutanoate (2-ketoisovalerate) to form 3-carboxy-3-hydroxy-4-methylpentanoate (2-isopropylmalate). In Klebsiella pneumoniae subsp. pneumoniae (strain ATCC 700721 / MGH 78578), this protein is 2-isopropylmalate synthase.